A 315-amino-acid chain; its full sequence is Methionyl-tRNA formyltransferase (315 aa).

113–116 (SLLP) is a (6S)-5,6,7,8-tetrahydrofolate binding site.

The protein belongs to the Fmt family.

The catalysed reaction is L-methionyl-tRNA(fMet) + (6R)-10-formyltetrahydrofolate = N-formyl-L-methionyl-tRNA(fMet) + (6S)-5,6,7,8-tetrahydrofolate + H(+). Attaches a formyl group to the free amino group of methionyl-tRNA(fMet). The formyl group appears to play a dual role in the initiator identity of N-formylmethionyl-tRNA by promoting its recognition by IF2 and preventing the misappropriation of this tRNA by the elongation apparatus. The protein is Methionyl-tRNA formyltransferase of Salmonella dublin (strain CT_02021853).